The chain runs to 38 residues: Photosystem II reaction center protein L (38 aa).

A helical transmembrane segment spans residues 17-37; the sequence is SLYWGLLLIFVLAVLFSSYIF.

The protein belongs to the PsbL family. In terms of assembly, PSII is composed of 1 copy each of membrane proteins PsbA, PsbB, PsbC, PsbD, PsbE, PsbF, PsbH, PsbI, PsbJ, PsbK, PsbL, PsbM, PsbT, PsbX, PsbY, PsbZ, Psb30/Ycf12, at least 3 peripheral proteins of the oxygen-evolving complex and a large number of cofactors. It forms dimeric complexes.

The protein localises to the plastid. It localises to the chloroplast thylakoid membrane. Its function is as follows. One of the components of the core complex of photosystem II (PSII). PSII is a light-driven water:plastoquinone oxidoreductase that uses light energy to abstract electrons from H(2)O, generating O(2) and a proton gradient subsequently used for ATP formation. It consists of a core antenna complex that captures photons, and an electron transfer chain that converts photonic excitation into a charge separation. This subunit is found at the monomer-monomer interface and is required for correct PSII assembly and/or dimerization. This Tupiella akineta (Green alga) protein is Photosystem II reaction center protein L.